Here is a 340-residue protein sequence, read N- to C-terminus: L-threonine 3-dehydrogenase (340 aa).

Cys38 is a binding site for Zn(2+). Catalysis depends on charge relay system residues Thr40 and His43. Residues His63, Glu64, Cys93, Cys96, Cys99, and Cys107 each contribute to the Zn(2+) site. Residues Ile175, Asp195, Arg200, 262–264 (LGI), and 286–287 (IY) each bind NAD(+).

The protein belongs to the zinc-containing alcohol dehydrogenase family. As to quaternary structure, homotetramer. The cofactor is Zn(2+).

The protein resides in the cytoplasm. It carries out the reaction L-threonine + NAD(+) = (2S)-2-amino-3-oxobutanoate + NADH + H(+). It functions in the pathway amino-acid degradation; L-threonine degradation via oxydo-reductase pathway; glycine from L-threonine: step 1/2. Functionally, catalyzes the NAD(+)-dependent oxidation of L-threonine to 2-amino-3-ketobutyrate. The protein is L-threonine 3-dehydrogenase of Legionella pneumophila subsp. pneumophila (strain Philadelphia 1 / ATCC 33152 / DSM 7513).